We begin with the raw amino-acid sequence, 343 residues long: L-threonine 3-dehydrogenase (343 aa).

Cys38 contributes to the Zn(2+) binding site. Residues Thr40 and His43 each act as charge relay system in the active site. Zn(2+)-binding residues include His63, Glu64, Cys93, Cys96, Cys99, and Cys107. NAD(+) is bound by residues Ile175, Asp195, Arg200, 262-264, and 286-287; these read LGI and IY.

The protein belongs to the zinc-containing alcohol dehydrogenase family. Homotetramer. It depends on Zn(2+) as a cofactor.

The protein localises to the cytoplasm. The catalysed reaction is L-threonine + NAD(+) = (2S)-2-amino-3-oxobutanoate + NADH + H(+). It functions in the pathway amino-acid degradation; L-threonine degradation via oxydo-reductase pathway; glycine from L-threonine: step 1/2. Functionally, catalyzes the NAD(+)-dependent oxidation of L-threonine to 2-amino-3-ketobutyrate. The polypeptide is L-threonine 3-dehydrogenase (Paraburkholderia xenovorans (strain LB400)).